The sequence spans 261 residues: Small ribosomal subunit protein uS2 (261 aa).

It belongs to the universal ribosomal protein uS2 family.

This chain is Small ribosomal subunit protein uS2, found in Streptococcus mutans serotype c (strain ATCC 700610 / UA159).